The following is a 519-amino-acid chain: ATP synthase subunit alpha (519 aa).

An ATP-binding site is contributed by 175–182 (GDRQTGKT).

The protein belongs to the ATPase alpha/beta chains family. As to quaternary structure, F-type ATPases have 2 components, CF(1) - the catalytic core - and CF(0) - the membrane proton channel. CF(1) has five subunits: alpha(3), beta(3), gamma(1), delta(1), epsilon(1). CF(0) has three main subunits: a(1), b(2) and c(9-12). The alpha and beta chains form an alternating ring which encloses part of the gamma chain. CF(1) is attached to CF(0) by a central stalk formed by the gamma and epsilon chains, while a peripheral stalk is formed by the delta and b chains.

It is found in the cell inner membrane. It carries out the reaction ATP + H2O + 4 H(+)(in) = ADP + phosphate + 5 H(+)(out). Produces ATP from ADP in the presence of a proton gradient across the membrane. The alpha chain is a regulatory subunit. The protein is ATP synthase subunit alpha of Acinetobacter baylyi (strain ATCC 33305 / BD413 / ADP1).